The following is a 426-amino-acid chain: MNALTVKRRLPVLLFLFHISLSSISSNTILENDFHSSFVQRRLKGHERREIQKEILTILGLQHRPRPYLPEKKKSAPLFMMDLYNAVNIEEMHAEDVSYSNKPISLNEAFSLATDQENGFLAHADTVMSFANLVDNDNELHKNSYRQKFKFDLTDIPLGDELTAAEFRIYKDYVQNNETYQVTIYQVLKKQADKDPYLFQVDSRTIWGTEKGWLTFDITATGNHWVMNPHYNLGLQLSVESMDMQNVNPRLVGLVGKNGPQDKQPFMVAFFKTSDIHLRSVRSTSNKHWNQERAKTYKEQDNLPPANITDGIMPPGKRRFLKQACKKHELFVSFRDLGWQDWIIAPEGYAAYYCDGECAFPLNSFMNATNHAIVQTLVHFINPETVPKPCCAPTQLNGISVLYFDDSANVILKKYKNMVVQACGCH.

The first 22 residues, 1–22 (MNALTVKRRLPVLLFLFHISLS), serve as a signal peptide directing secretion. The propeptide occupies 23–282 (SISSNTILEN…TSDIHLRSVR (260 aa)). 3 N-linked (GlcNAc...) asparagine glycosylation sites follow: Asn-177, Asn-307, and Asn-367. Intrachain disulfides connect Cys-325–Cys-391, Cys-354–Cys-423, and Cys-358–Cys-425.

The protein belongs to the TGF-beta family. In terms of assembly, homodimer; disulfide-linked. Interacts with twsg1.

Its subcellular location is the secreted. In terms of biological role, growth factor of the TGF-beta superfamily that plays important role in various biological processes, including embryogenesis, hematopoiesis, neurogenesis and skeletal morphogenesis. Initiates the canonical BMP signaling cascade by associating with type I receptor ACVR1 and type II receptor ACVR2A. Once all three components are bound together in a complex at the cell surface, ACVR2A phosphorylates and activates ACVR1. In turn, ACVR1 propagates signal by phosphorylating SMAD1/5/8 that travel to the nucleus and act as activators and repressors of transcription of target genes. The sequence is that of Bone morphogenetic protein 7 (bmp7) from Xenopus laevis (African clawed frog).